We begin with the raw amino-acid sequence, 215 residues long: Probable GTP-binding protein EngB (215 aa).

The EngB-type G domain occupies 30-204 (TGIEVAFAGR…RQKLDTWFSE (175 aa)). Residues 38-45 (GRSNAGKS), 65-69 (GRTQL), 83-86 (DLPG), 150-153 (TKAD), and 183-185 (FSS) each bind GTP. Mg(2+) contacts are provided by S45 and T67.

This sequence belongs to the TRAFAC class TrmE-Era-EngA-EngB-Septin-like GTPase superfamily. EngB GTPase family. It depends on Mg(2+) as a cofactor.

Necessary for normal cell division and for the maintenance of normal septation. This Escherichia coli O1:K1 / APEC protein is Probable GTP-binding protein EngB.